The chain runs to 417 residues: Oxidoreductase phnG (417 aa).

Residues 16–20 (GGSYA), arginine 61, and aspartate 317 each bind 6-hydroxy-FAD.

Belongs to the FAD-dependent oxidoreductase family. Requires 6-hydroxy-FAD as cofactor.

The catalysed reaction is deoxyherqueinone + NADPH + O2 + H(+) = herqueinone + NADP(+) + H2O. It participates in secondary metabolite biosynthesis. Its function is as follows. Oxidoreductase; part of the gene cluster that mediates the biosynthesis of phenalenones such as herqueinone, compounds that have been reported to treat tumors, bacterial infections and/or mycoses, and rheumatic diseases. The non-reducing polyketide synthase phnA synthesizes the heptaketide backbone and cyclizes it into the angular, hemiketal-containing naphtho-gamma-pyrone prephenalenone. The product template (PT) domain of phnA catalyzes only the C4-C9 aldol condensation, which is unprecedented among known PT domains. The transformation of prephenalenone to phenalenones requires an FAD-dependent monooxygenase phnB, which catalyzes the C2 aromatic hydroxylation of prephenalenone and ring opening of the gamma-pyrone ring simultaneously. Subsequent intramolecular deprotonation of C3 phenolic oxygen accelerates phenalenone ring closure to yield the tricyclic phenalenone core with a C2 hydroxylation. The prenyltransferase phnF further catalyzes reverse C-prenylation of phenalenone by direct electrophilic substitution at C6, or possibly via first a forward O-prenylation of a neighboring phenol in phenalenone, followed by a Claisen rearrangement. The hydroalkoxylation enzyme phnH catalyzes the 5-exo-trig cyclization via acid catalysis after the spontaneous deprotonation of 7-OH, which leads to the formation of the dihydrobenzofuran atrovenetin. Atrovenetin is further converted to deoxyherqueinone by the O-methyltransferase phnC which can methylate C2-OH to stabilize the northern portion of the phenalenone core. Finally, the oxidoreductase phnG converts deoxyherqueinone to herqueinone via C6 hydroxylation. The protein is Oxidoreductase phnG of Penicillium herquei.